Reading from the N-terminus, the 249-residue chain is Probable transcriptional regulatory protein Csal_1845 (249 aa).

Belongs to the TACO1 family.

The protein localises to the cytoplasm. The chain is Probable transcriptional regulatory protein Csal_1845 from Chromohalobacter salexigens (strain ATCC BAA-138 / DSM 3043 / CIP 106854 / NCIMB 13768 / 1H11).